A 592-amino-acid chain; its full sequence is uncharacterized protein (592 aa).

The next 6 membrane-spanning stretches (helical) occupy residues 12-32 (IWIL…IFLL), 58-78 (PILF…ISLV), 102-122 (MGLF…SYYL), 191-211 (ISYT…GVEI), 214-234 (MMVF…FWLG), and 299-319 (FSGF…LIQV). The 301-residue stretch at 58–358 (PILFFLLIVA…FRSTYDNFAS (301 aa)) folds into the ABC transmembrane type-1 domain. Residues 391 to 592 (VIFKNLSIQN…LQDKGQWQVL (202 aa)) enclose the ABC transporter domain. An ATP-binding site is contributed by 424–431 (GKSGAGKT).

The protein belongs to the ABC transporter superfamily.

The protein localises to the cell inner membrane. This is an uncharacterized protein from Haemophilus influenzae (strain ATCC 51907 / DSM 11121 / KW20 / Rd).